Reading from the N-terminus, the 209-residue chain is Protein ASG7 (209 aa).

The Lumenal portion of the chain corresponds to 1-49; it reads MTTLASSIEHKTKHLAAPFENDENTWMKKYCCQCKSCKMSVPVQPWLPR. The chain crosses the membrane as a helical span at residues 50-70; sequence FFVFGILCPVFWLVNLLAWWF. The Cytoplasmic portion of the chain corresponds to 71–184; it reads LQYWQPHELE…LLRKTFRNWN (114 aa). Residues Ser-121, Ser-123, and Ser-125 each carry the phosphoserine modification. Thr-153 is subject to Phosphothreonine. Residues 185 to 205 form a helical membrane-spanning segment; sequence LRSLLGLLIDSILIIFVVLLC. The Lumenal portion of the chain corresponds to 206 to 209; that stretch reads KKSR.

The protein resides in the endomembrane system. Functionally, required for receptor inhibition of inappropriately expressed a-factor receptor (STE3) in MAT a cells. Inhibits signaling by relocalizing the G protein beta-gamma (STE4-STE18) subunit to intracellular membranes. May also be a mechanism for the down-regulation of the mating pheromone response after the zygotic fusion event, promoting the transition of the new diploid cell to vegetative growth. The protein is Protein ASG7 (ASG7) of Saccharomyces cerevisiae (strain YJM789) (Baker's yeast).